Consider the following 210-residue polypeptide: DNA replication complex GINS protein PSF3 (210 aa).

Belongs to the GINS3/PSF3 family. In terms of assembly, component of the GINS complex which is a heterotetramer of gins1/psf1, gins2/psf2, gins3/psf3 and gins4/sld5. Component of the CMG helicase complex, composed of the mcm2-7 complex, the GINS complex and cdc45.

The protein resides in the nucleus. It is found in the chromosome. Functionally, required for correct functioning of the GINS complex, a complex that plays an essential role in the initiation of DNA replication, and progression of DNA replication forks. GINS complex is a core component of CDC45-MCM-GINS (CMG) helicase, the molecular machine that unwinds template DNA during replication, and around which the replisome is built. The protein is DNA replication complex GINS protein PSF3 of Xenopus laevis (African clawed frog).